The following is a 465-amino-acid chain: Glutamate--tRNA ligase (465 aa).

The 'HIGH' region motif lies at 8-18 (PSPTGDLHIGG). Positions 235–239 (RLSKR) match the 'KMSKS' region motif. ATP is bound at residue lysine 238.

Belongs to the class-I aminoacyl-tRNA synthetase family. Glutamate--tRNA ligase type 1 subfamily. In terms of assembly, monomer.

It is found in the cytoplasm. It catalyses the reaction tRNA(Glu) + L-glutamate + ATP = L-glutamyl-tRNA(Glu) + AMP + diphosphate. In terms of biological role, catalyzes the attachment of glutamate to tRNA(Glu) in a two-step reaction: glutamate is first activated by ATP to form Glu-AMP and then transferred to the acceptor end of tRNA(Glu). This is Glutamate--tRNA ligase from Dichelobacter nodosus (strain VCS1703A).